Here is a 270-residue protein sequence, read N- to C-terminus: Transcriptional regulator BrlR (270 aa).

Position 1 (Met1) interacts with 3',3'-c-di-GMP. An HTH merR-type domain is found at 1 to 71 (MLTIGQLARI…LEAIDRLKRD (71 aa)). The segment at residues 4 to 23 (IGQLARIFEISTKTLRHYDA) is a DNA-binding region (H-T-H motif). 3',3'-c-di-GMP-binding residues include Arg31, Ser34, Asp35, Tyr40, Arg67, Arg70, Arg86, and Tyr270. The involved in effector-binding, probably including pyocyanine-binding stretch occupies residues 120–270 (MHARIVERPA…SQVDLYIPIY (151 aa)).

As to quaternary structure, monomer. Homodimer; dimer formation enhanced in the presence of the second messenger, cyclic di-GMP (c-di-GMP). Homotetramer; dimer of dimers, arranged in a head-to-tail fashion, which may reduce DNA-binding ability. Conformational changes upon binding c-di-GMP or pyocyanine may facilitate DNA binding.

Transcriptional regulator. Responsive to the second messenger cyclic di-GMP (c-di-GMP) and to the virulence factor pyocyanine, which both enhance gene expression and promoter DNA binding of BrlR. Activates expression of operons encoding the multidrug efflux pumps MexAB-OprM and MexEF-OprN and several ABC transport systems, acting by direct binding to their respective promoters. Also acts as a repressor of the two component regulatory system, PhoPQ. Binds to promoter of its own gene. Contributes to the antimicrobial tolerance exhibited by biofilms, acting, at least in part, by activating expression of multidrug efflux pumps and ABC transporters. The chain is Transcriptional regulator BrlR from Pseudomonas aeruginosa (strain ATCC 15692 / DSM 22644 / CIP 104116 / JCM 14847 / LMG 12228 / 1C / PRS 101 / PAO1).